The primary structure comprises 125 residues: Gem-associated protein 7 (125 aa).

Met1 carries the post-translational modification N-acetylmethionine. One can recognise an SUZ-C domain in the interval Met1–Gly29. Residues Met1–Ala52 are disordered. The residue at position 3 (Thr3) is a Phosphothreonine. The Sm domain occupies Arg59–Pro125.

It belongs to the gemin-7 family. As to quaternary structure, part of the core SMN complex that contains SMN1, GEMIN2/SIP1, DDX20/GEMIN3, GEMIN4, GEMIN5, GEMIN6, GEMIN7, GEMIN8 and STRAP/UNRIP. Part of the SMN-Sm complex that contains SMN1, GEMIN2/SIP1, DDX20/GEMIN3, GEMIN4, GEMIN5, GEMIN6, GEMIN7, GEMIN8, STRAP/UNRIP and the Sm proteins SNRPB, SNRPD1, SNRPD2, SNRPD3, SNRPE, SNRPF and SNRPG. Interacts with GEMIN6; the interaction is direct. Interacts with STRAP/UNRIP; the interaction is direct. Interacts with GEMIN8; the interaction is direct. Interacts with SNRPB, SNRPD2, SNRPD3 and SNRPE; the interaction is direct.

The protein resides in the nucleus. It is found in the nucleoplasm. The protein localises to the gem. Its subcellular location is the cytoplasm. Its function is as follows. The SMN complex catalyzes the assembly of small nuclear ribonucleoproteins (snRNPs), the building blocks of the spliceosome, and thereby plays an important role in the splicing of cellular pre-mRNAs. Most spliceosomal snRNPs contain a common set of Sm proteins SNRPB, SNRPD1, SNRPD2, SNRPD3, SNRPE, SNRPF and SNRPG that assemble in a heptameric protein ring on the Sm site of the small nuclear RNA to form the core snRNP (Sm core). In the cytosol, the Sm proteins SNRPD1, SNRPD2, SNRPE, SNRPF and SNRPG are trapped in an inactive 6S pICln-Sm complex by the chaperone CLNS1A that controls the assembly of the core snRNP. To assemble core snRNPs, the SMN complex accepts the trapped 5Sm proteins from CLNS1A forming an intermediate. Binding of snRNA inside 5Sm triggers eviction of the SMN complex, thereby allowing binding of SNRPD3 and SNRPB to complete assembly of the core snRNP. This is Gem-associated protein 7 (GEMIN7) from Bos taurus (Bovine).